The chain runs to 411 residues: Lissencephaly-1 homolog (411 aa).

A LisH domain is found at 9–41 (QREELNQAIADYLGSNGYADSLETFRKEADLST). Residues 56 to 83 (TSVIRLQKKVMELEAKLTEAEKEVIEGA) are a coiled coil. WD repeat units lie at residues 106 to 147 (GHRA…RSLK), 148 to 187 (GHTDSVQDVAFDAQGKLLASCSADLSIKLWDFQQSYECIK), 191 to 230 (GHDHNVSSVAFVPAGDYVLSASRDRTIKMWEVATGYCVKT), 233 to 272 (GHREWVRMVRVHIEGSIFATCSNDQTIRVWLTNSKDCKVE), 275 to 334 (DHEH…CLLT), 337 to 376 (GHDNWVRGLAFHPGGKYLVSASDDKTIRVWDLRNKRCMKT), and 379 to 411 (AHQHFCTSIDFHKAHPYVISGSVDQTVKVWECR).

It belongs to the WD repeat LIS1/nudF family.

It localises to the cytoplasm. It is found in the cytoskeleton. The protein localises to the microtubule organizing center. Its subcellular location is the centrosome. Its function is as follows. Positively regulates the activity of the minus-end directed microtubule motor protein dynein. May enhance dynein-mediated microtubule sliding by targeting dynein to the microtubule plus end. Required for several dynein- and microtubule-dependent processes. This is Lissencephaly-1 homolog from Drosophila sechellia (Fruit fly).